Consider the following 177-residue polypeptide: Probable adenylyl-sulfate kinase (177 aa).

12-19 (GLSGAGKT) contributes to the ATP binding site. Ser86 serves as the catalytic Phosphoserine intermediate.

The protein belongs to the APS kinase family.

The enzyme catalyses adenosine 5'-phosphosulfate + ATP = 3'-phosphoadenylyl sulfate + ADP + H(+). It participates in sulfur metabolism; hydrogen sulfide biosynthesis; sulfite from sulfate: step 2/3. Catalyzes the synthesis of activated sulfate. In Synechocystis sp. (strain ATCC 27184 / PCC 6803 / Kazusa), this protein is Probable adenylyl-sulfate kinase (cysC).